The primary structure comprises 91 residues: Large ribosomal subunit protein uL23c (91 aa).

This sequence belongs to the universal ribosomal protein uL23 family. As to quaternary structure, part of the 50S ribosomal subunit.

The protein resides in the plastid. It localises to the chloroplast. In terms of biological role, binds to 23S rRNA. This is Large ribosomal subunit protein uL23c (rpl23) from Anthoceros angustus (Hornwort).